A 229-amino-acid polypeptide reads, in one-letter code: UPF0228 protein MA_3119 (229 aa).

A compositionally biased stretch (low complexity) spans 35-66 (STPVNTSTPVNTSTPVNTSTPVNTSTPVSTST). Residues 35–67 (STPVNTSTPVNTSTPVNTSTPVNTSTPVSTSTI) form a disordered region.

It belongs to the UPF0228 family.

The chain is UPF0228 protein MA_3119 from Methanosarcina acetivorans (strain ATCC 35395 / DSM 2834 / JCM 12185 / C2A).